The sequence spans 93 residues: Probable Fe(2+)-trafficking protein (93 aa).

This sequence belongs to the Fe(2+)-trafficking protein family.

Functionally, could be a mediator in iron transactions between iron acquisition and iron-requiring processes, such as synthesis and/or repair of Fe-S clusters in biosynthetic enzymes. The chain is Probable Fe(2+)-trafficking protein from Acidithiobacillus ferrooxidans (strain ATCC 23270 / DSM 14882 / CIP 104768 / NCIMB 8455) (Ferrobacillus ferrooxidans (strain ATCC 23270)).